Consider the following 281-residue polypeptide: LIM domain-containing protein G (281 aa).

LIM zinc-binding domains lie at 40–101, 141–205, and 206–262; these read LNCS…IKFN, DICT…SKQV, and NCFA…FTQP.

This chain is LIM domain-containing protein G (limG), found in Dictyostelium discoideum (Social amoeba).